The sequence spans 571 residues: Septation ring formation regulator EzrA (571 aa).

At 1–3 (MYY) the chain is on the extracellular side. The helical transmembrane segment at 4–22 (MLIGFIIVVIAIISAGYIL) threads the bilayer. Topologically, residues 23–571 (KRKHYQRINE…ESKVSVDDIE (549 aa)) are cytoplasmic. 5 coiled-coil regions span residues 169-214 (VETK…AQME), 249-298 (AQME…DTLE), 326-374 (DALA…ASGE), 400-438 (KFAE…RERL), and 474-529 (TQDW…ENHF).

It belongs to the EzrA family.

It is found in the cell membrane. In terms of biological role, negative regulator of FtsZ ring formation; modulates the frequency and position of FtsZ ring formation. Inhibits FtsZ ring formation at polar sites. Interacts either with FtsZ or with one of its binding partners to promote depolymerization. This chain is Septation ring formation regulator EzrA, found in Listeria welshimeri serovar 6b (strain ATCC 35897 / DSM 20650 / CCUG 15529 / CIP 8149 / NCTC 11857 / SLCC 5334 / V8).